Reading from the N-terminus, the 68-residue chain is MMKKSMLLLFFLGMVSFSLADDKREDEGEEKRADEGEEKRAAEEKRFIKELLPHLSGIIDSVANAIKG.

A signal peptide spans 1–20; the sequence is MMKKSMLLLFFLGMVSFSLA. Residues 21-44 constitute a propeptide that is removed on maturation; that stretch reads DDKREDEGEEKRADEGEEKRAAEE. Residues 22-41 are disordered; it reads DKREDEGEEKRADEGEEKRA. Lysine 67 bears the Lysine amide mark.

It belongs to the frog skin active peptide (FSAP) family. Brevinin subfamily. As to expression, expressed by the skin dorsal glands.

The protein localises to the secreted. Peptide with potent vasoconstrictor properties (EC50=25 pM). Has moderate antimicrobial activity against Gram-positive bacterium S.aureus (MIC=55 uM) and against Gram-negative bacterium E.coli (MIC=110 uM). Not active against fungus C.albicans. Has weak hemolytic activity against horse erythrocytes. This Phlyctimantis maculatus (Red-legged running frog) protein is Kasstasin.